Reading from the N-terminus, the 253-residue chain is Imidazole glycerol phosphate synthase subunit HisF (253 aa).

Active-site residues include Asp11 and Asp130.

Belongs to the HisA/HisF family. Heterodimer of HisH and HisF.

It is found in the cytoplasm. It catalyses the reaction 5-[(5-phospho-1-deoxy-D-ribulos-1-ylimino)methylamino]-1-(5-phospho-beta-D-ribosyl)imidazole-4-carboxamide + L-glutamine = D-erythro-1-(imidazol-4-yl)glycerol 3-phosphate + 5-amino-1-(5-phospho-beta-D-ribosyl)imidazole-4-carboxamide + L-glutamate + H(+). The protein operates within amino-acid biosynthesis; L-histidine biosynthesis; L-histidine from 5-phospho-alpha-D-ribose 1-diphosphate: step 5/9. IGPS catalyzes the conversion of PRFAR and glutamine to IGP, AICAR and glutamate. The HisF subunit catalyzes the cyclization activity that produces IGP and AICAR from PRFAR using the ammonia provided by the HisH subunit. The polypeptide is Imidazole glycerol phosphate synthase subunit HisF (Dinoroseobacter shibae (strain DSM 16493 / NCIMB 14021 / DFL 12)).